The primary structure comprises 509 residues: MEAIISFAGIGINYKKLQSKLQHDVGRFLRALTITARALPGQPKHIAIRQETAFTLQGEYIYFPILLRKQFEMFNMVYTAHPVSLRALPCVETEFPLFNYQQEMVDKIHKKLLSPYGRFYLHLNTGLGKTRIAISIIQKLLYPTLVIVPTKAIQIQWIDELKLLLPHLRVAAYNNAACKKKDITSKEYDVIVGIINTLRKKPEPFFEPFGLVVLDEAHELHSPENYKIFWKIQLSRILGLSATPLDRPDGMDKIILHHLGQPQRTVSPTTTFSGYVREIEYQGHPDFVKPVCINEKVSAIATIDKLLQDPSRIQLVVNETKRLYSLHTAEPQKWGTNEPYGIIIFVEFRKLLEIFYQALSEEFKDVQIIVPEVALLCGGVSNTALSQAHSASIILLTYGYGRRGISFKHMTSIIMATPRRNNMEQILGRITRQGSDEKKVRIVVDIKDTLSPLSSQVYDRHRIYKKKGYPIFKCSASYQQPYSSNEVLIWDPYNESCLASTTTPPSPSK.

A Helicase ATP-binding domain is found at 110-262 (KKLLSPYGRF…KIILHHLGQP (153 aa)). Residue 123 to 130 (LNTGLGKT) coordinates ATP. The DEAH box signature appears at 215–218 (DEAH).

This sequence belongs to the DEAD box helicase family. DEAH subfamily.

It carries out the reaction ATP + H2O = ADP + phosphate + H(+). The sequence is that of Putative ATP-dependent RNA helicase QP509L from Ornithodoros (relapsing fever ticks).